Here is a 177-residue protein sequence, read N- to C-terminus: Large ribosomal subunit protein uL22 (177 aa).

Residues valine 118–glutamine 177 are disordered. The span at arginine 121 to glycine 130 shows a compositional bias: basic and acidic residues. Low complexity predominate over residues glycine 145–glutamate 167.

Belongs to the universal ribosomal protein uL22 family. Part of the 50S ribosomal subunit.

Functionally, this protein binds specifically to 23S rRNA; its binding is stimulated by other ribosomal proteins, e.g. L4, L17, and L20. It is important during the early stages of 50S assembly. It makes multiple contacts with different domains of the 23S rRNA in the assembled 50S subunit and ribosome. The globular domain of the protein is located near the polypeptide exit tunnel on the outside of the subunit, while an extended beta-hairpin is found that lines the wall of the exit tunnel in the center of the 70S ribosome. The chain is Large ribosomal subunit protein uL22 from Mycobacterium sp. (strain KMS).